The primary structure comprises 377 residues: TelA-like protein SSP1345 (377 aa).

A compositionally biased stretch (basic and acidic residues) spans 1–18; it reads MAREQDSINSHPLDKYID. Residues 1 to 39 are disordered; it reads MAREQDSINSHPLDKYIDENSANESEIIKSSSQFSHEDQ. Residues 20 to 34 show a composition bias toward polar residues; sequence NSANESEIIKSSSQF.

This sequence belongs to the TelA family.

This is TelA-like protein SSP1345 from Staphylococcus saprophyticus subsp. saprophyticus (strain ATCC 15305 / DSM 20229 / NCIMB 8711 / NCTC 7292 / S-41).